A 358-amino-acid polypeptide reads, in one-letter code: 3-dehydroquinate synthase (358 aa).

Residues 70–75, 104–108, 128–129, Lys141, Lys150, and 168–171 each bind NAD(+); these read DGEQYK, GVIGD, TT, and CLHT. Zn(2+)-binding residues include Glu183, His246, and His263.

The protein belongs to the sugar phosphate cyclases superfamily. Dehydroquinate synthase family. The cofactor is Co(2+). Zn(2+) is required as a cofactor. It depends on NAD(+) as a cofactor.

It localises to the cytoplasm. It carries out the reaction 7-phospho-2-dehydro-3-deoxy-D-arabino-heptonate = 3-dehydroquinate + phosphate. Its pathway is metabolic intermediate biosynthesis; chorismate biosynthesis; chorismate from D-erythrose 4-phosphate and phosphoenolpyruvate: step 2/7. Catalyzes the conversion of 3-deoxy-D-arabino-heptulosonate 7-phosphate (DAHP) to dehydroquinate (DHQ). This Shewanella loihica (strain ATCC BAA-1088 / PV-4) protein is 3-dehydroquinate synthase.